Reading from the N-terminus, the 88-residue chain is UPF0223 protein OB1419 (88 aa).

This sequence belongs to the UPF0223 family.

This chain is UPF0223 protein OB1419, found in Oceanobacillus iheyensis (strain DSM 14371 / CIP 107618 / JCM 11309 / KCTC 3954 / HTE831).